We begin with the raw amino-acid sequence, 218 residues long: UPF0502 protein Shewana3_1622 (218 aa).

Belongs to the UPF0502 family.

This is UPF0502 protein Shewana3_1622 from Shewanella sp. (strain ANA-3).